The primary structure comprises 1654 residues: Microtubule cross-linking factor 2 (1654 aa).

The interval Met-1 to Arg-188 is disordered. Residues Gly-55–Ala-66 are compositionally biased toward low complexity. A compositionally biased stretch (pro residues) spans Gly-102–Ser-113. Low complexity predominate over residues Leu-132–Gly-147. A required for association with Golgi apparatus membrane region spans residues Pro-209–Leu-238. Coiled coils occupy residues Leu-216 to Arg-279, Ser-308 to Glu-349, Leu-448 to Glu-546, Ile-816 to Leu-843, and Ser-1079 to Ala-1113. The tract at residues Thr-348–Ser-379 is disordered. Residues Ser-1122–Val-1145 show a composition bias toward basic and acidic residues. Positions Ser-1122–Ser-1146 are disordered. 2 positions are modified to phosphoserine: Ser-1165 and Ser-1251. The tract at residues Leu-1406–Lys-1505 is KR-rich domain required for microtubules binding. 3 disordered regions span residues Arg-1427 to Thr-1450, Pro-1537 to Pro-1560, and Asn-1627 to Gln-1654. The span at Thr-1628–Leu-1638 shows a compositional bias: basic residues.

This sequence belongs to the MTCL family. In terms of assembly, interacts with CLASP2. Interacts with CLASP1. The C-terminal SOGA 25 kDa form occurs as a monomer. Proteolytically cleaved into a C-terminal SOGA 25 kDa form that is detected in plasma. Proteolytically cleaved in primary hepatocytes into a C-terminal SOGA 80 kDa form. In terms of processing, phosphorylated during mitosis in a CDK1-dependent manner. As to expression, expressed in liver (at protein level).

Its subcellular location is the secreted. The protein localises to the cytoplasm. The protein resides in the cytoskeleton. It localises to the golgi apparatus membrane. It is found in the midbody. In terms of biological role, microtubule-associated factor that enables integration of the centrosomal and Golgi-associated microtubules on the Golgi membrane, supporting directional migration. Preferentially acts on the perinuclear microtubules accumulated around the Golgi. Associates with the Golgi membrane through the N-terminal coiled-coil region and directly binds microtubules through the C-terminal domain. Required for faithful chromosome segregation during mitosis. Regulates autophagy by playing a role in the reduction of glucose production in an adiponectin- and insulin-dependent manner. The sequence is that of Microtubule cross-linking factor 2 (Mtcl2) from Mus musculus (Mouse).